Reading from the N-terminus, the 83-residue chain is EKCLDQIQVNSLENLSLLVPSLCLLPPVRGNCSSQILHYFYNTTSRTCETFIYSGCNGNRNNFNSEEYCLKTCRRNKNRNNNN.

N-linked (GlcNAc...) asparagine glycosylation is found at asparagine 14, asparagine 31, and asparagine 42. The BPTI/Kunitz inhibitor domain occupies 23 to 73 (CLLPPVRGNCSSQILHYFYNTTSRTCETFIYSGCNGNRNNFNSEEYCLKTC). 3 disulfide bridges follow: cysteine 23–cysteine 73, cysteine 32–cysteine 56, and cysteine 48–cysteine 69.

Post-translationally, N-glycosylated. Found in the whey fraction of milk.

Its subcellular location is the secreted. This Notamacropus eugenii (Tammar wallaby) protein is Early lactation protein (ELP).